Consider the following 561-residue polypeptide: Nucleoprotein (561 aa).

The tract at residues V52–I237 is binding site for the cap structure m7GTP. Residues S336–Q355 are disordered. Mn(2+) is bound by residues D380 and E382. 4 residues coordinate Zn(2+): E390, C497, H500, and C521. Position 525 (D525) interacts with Mn(2+).

The protein belongs to the arenaviridae nucleocapsid protein family. Homomultimerizes to form the nucleocapsid. Binds to viral genomic RNA. Interacts with glycoprotein G2. Interacts with protein Z; this interaction probably directs the encapsidated genome to budding sites. Interacts with protein L; this interaction does not interfere with Z-L interaction. Interacts with host IKBKE (via Protein kinase domain); the interaction inhibits IKBKE kinase activity.

The protein localises to the virion. The protein resides in the host cytoplasm. Functionally, encapsidates the genome, protecting it from nucleases. The encapsidated genomic RNA is termed the nucleocapsid (NC). Serves as template for viral transcription and replication. The increased presence of protein N in host cell does not seem to trigger the switch from transcription to replication as observed in other negative strain RNA viruses. Through the interaction with host IKBKE, strongly inhibits the phosphorylation and nuclear translocation of host IRF3, a protein involved in interferon activation pathway, leading to the inhibition of interferon-beta and IRF3-dependent promoters activation. Also encodes a functional 3'-5' exoribonuclease that degrades preferentially dsRNA substrates and thereby participates in the suppression of interferon induction. This Cavia cutleri (Guinea pig) protein is Nucleoprotein.